We begin with the raw amino-acid sequence, 234 residues long: Large ribosomal subunit protein uL1 (234 aa).

Belongs to the universal ribosomal protein uL1 family. As to quaternary structure, part of the 50S ribosomal subunit.

Its function is as follows. Binds directly to 23S rRNA. The L1 stalk is quite mobile in the ribosome, and is involved in E site tRNA release. Protein L1 is also a translational repressor protein, it controls the translation of the L11 operon by binding to its mRNA. This Salmonella gallinarum (strain 287/91 / NCTC 13346) protein is Large ribosomal subunit protein uL1.